The chain runs to 114 residues: Fluoride-specific ion channel FluC 2 (114 aa).

4 consecutive transmembrane segments (helical) span residues 3-23 (YVII…ECWL), 31-51 (LMTA…WILA), 57-77 (GIEL…TFCM), and 92-112 (MIYL…GWNV). Glycine 67 and threonine 70 together coordinate Na(+).

The protein belongs to the fluoride channel Fluc/FEX (TC 1.A.43) family.

The protein resides in the cell membrane. The enzyme catalyses fluoride(in) = fluoride(out). Its activity is regulated as follows. Na(+) is not transported, but it plays an essential structural role and its presence is essential for fluoride channel function. Fluoride-specific ion channel. Important for reducing fluoride concentration in the cell, thus reducing its toxicity. This chain is Fluoride-specific ion channel FluC 2, found in Shouchella clausii (strain KSM-K16) (Alkalihalobacillus clausii).